The chain runs to 401 residues: Glucose-6-phosphate isomerase (401 aa).

Glu261 functions as the Proton donor in the catalytic mechanism. Active-site residues include His282 and Lys392.

Belongs to the GPI family. Homodimer.

It is found in the cytoplasm. The enzyme catalyses alpha-D-glucose 6-phosphate = beta-D-fructose 6-phosphate. The protein operates within carbohydrate biosynthesis; gluconeogenesis. It participates in carbohydrate degradation; glycolysis; D-glyceraldehyde 3-phosphate and glycerone phosphate from D-glucose: step 2/4. Competively inhibited by 6-phosphogluconate and erythrose 4-phosphate. Functionally, catalyzes the isomerization of glucose-6-P to fructose-6-P. The polypeptide is Glucose-6-phosphate isomerase (Methanocaldococcus jannaschii (strain ATCC 43067 / DSM 2661 / JAL-1 / JCM 10045 / NBRC 100440) (Methanococcus jannaschii)).